Reading from the N-terminus, the 79-residue chain is Acyl carrier protein 1 (79 aa).

The Carrier domain occupies 2-77 (DNIEQRVKKI…QAIDYARANV (76 aa)). Ser-37 is subject to O-(pantetheine 4'-phosphoryl)serine.

Belongs to the acyl carrier protein (ACP) family. Post-translationally, 4'-phosphopantetheine is transferred from CoA to a specific serine of apo-ACP by AcpS. This modification is essential for activity because fatty acids are bound in thioester linkage to the sulfhydryl of the prosthetic group.

It localises to the cytoplasm. Its pathway is lipid metabolism; fatty acid biosynthesis. In terms of biological role, carrier of the growing fatty acid chain in fatty acid biosynthesis. This Ralstonia nicotianae (strain ATCC BAA-1114 / GMI1000) (Ralstonia solanacearum) protein is Acyl carrier protein 1.